Consider the following 215-residue polypeptide: Uridine kinase (215 aa).

16–23 is a binding site for ATP; sequence GASASGKS.

The protein belongs to the uridine kinase family.

It is found in the cytoplasm. It catalyses the reaction uridine + ATP = UMP + ADP + H(+). The enzyme catalyses cytidine + ATP = CMP + ADP + H(+). It participates in pyrimidine metabolism; CTP biosynthesis via salvage pathway; CTP from cytidine: step 1/3. The protein operates within pyrimidine metabolism; UMP biosynthesis via salvage pathway; UMP from uridine: step 1/1. The sequence is that of Uridine kinase from Aliivibrio fischeri (strain ATCC 700601 / ES114) (Vibrio fischeri).